The chain runs to 343 residues: General transcription and DNA repair factor IIH subunit TFB6 (343 aa).

A Phosphotyrosine modification is found at tyrosine 69. Phosphothreonine occurs at positions 71 and 84. A phosphoserine mark is found at serine 104, serine 105, serine 108, and serine 342.

Component of the general transcription factor TFIIH, composed of a 7-subunit TFIIH core complex composed of XPB/SSL2, XPD/RAD3, SSL1, TFB1, TFB2, TFB4 and TFB5 which is active in NER; the 3-subunit CTD-kinase module TFIIK composed of CCL1, KIN28, and TFB3 which is active in transcription; as well as TFB6 that regulates SSL2 association with the complex. In terms of processing, phosphorylation leads the dissociation of from SSL2.

It is found in the cytoplasm. The protein localises to the nucleus. In terms of biological role, component of the general transcription and DNA repair factor IIH (TFIIH) core complex, which is involved in general and transcription-coupled nucleotide excision repair (NER) of damaged DNA and, when complexed to TFIIK, in RNA transcription by RNA polymerase II. In NER, TFIIH acts by opening DNA around the lesion to allow the excision of the damaged oligonucleotide and its replacement by a new DNA fragment. In transcription, TFIIH has an essential role in transcription initiation. When the pre-initiation complex (PIC) has been established, TFIIH is required for promoter opening and promoter escape. Phosphorylation of the C-terminal tail (CTD) of the largest subunit of RNA polymerase II by the kinase module TFIIK controls the initiation of transcription. TFB6 facilitates dissociation of the SSL2 helicase from TFIIH after transcription initiation. The protein is General transcription and DNA repair factor IIH subunit TFB6 of Saccharomyces cerevisiae (strain ATCC 204508 / S288c) (Baker's yeast).